The primary structure comprises 298 residues: tRNA pseudouridine synthase B (298 aa).

The Nucleophile role is filled by Asp-39.

This sequence belongs to the pseudouridine synthase TruB family. Type 1 subfamily.

It carries out the reaction uridine(55) in tRNA = pseudouridine(55) in tRNA. Its function is as follows. Responsible for synthesis of pseudouridine from uracil-55 in the psi GC loop of transfer RNAs. The chain is tRNA pseudouridine synthase B from Lactobacillus delbrueckii subsp. bulgaricus (strain ATCC BAA-365 / Lb-18).